The chain runs to 188 residues: ATP synthase subunit b 2 (188 aa).

The chain crosses the membrane as a helical span at residues 41–61 (FFWLVISFGFFYFFIARVIVP).

It belongs to the ATPase B chain family. As to quaternary structure, F-type ATPases have 2 components, F(1) - the catalytic core - and F(0) - the membrane proton channel. F(1) has five subunits: alpha(3), beta(3), gamma(1), delta(1), epsilon(1). F(0) has three main subunits: a(1), b(2) and c(10-14). The alpha and beta chains form an alternating ring which encloses part of the gamma chain. F(1) is attached to F(0) by a central stalk formed by the gamma and epsilon chains, while a peripheral stalk is formed by the delta and b chains.

It is found in the cell inner membrane. In terms of biological role, f(1)F(0) ATP synthase produces ATP from ADP in the presence of a proton or sodium gradient. F-type ATPases consist of two structural domains, F(1) containing the extramembraneous catalytic core and F(0) containing the membrane proton channel, linked together by a central stalk and a peripheral stalk. During catalysis, ATP synthesis in the catalytic domain of F(1) is coupled via a rotary mechanism of the central stalk subunits to proton translocation. Component of the F(0) channel, it forms part of the peripheral stalk, linking F(1) to F(0). The b'-subunit is a diverged and duplicated form of b found in plants and photosynthetic bacteria. The protein is ATP synthase subunit b 2 (atpF2) of Bartonella bacilliformis (strain ATCC 35685 / KC583 / Herrer 020/F12,63).